The chain runs to 265 residues: Orotidine 5'-phosphate decarboxylase (265 aa).

Substrate-binding positions include D38, 60 to 62 (KTH), 91 to 100 (DRKFADIGNT), Y213, and R232. K93 acts as the Proton donor in catalysis.

Belongs to the OMP decarboxylase family.

It carries out the reaction orotidine 5'-phosphate + H(+) = UMP + CO2. It functions in the pathway pyrimidine metabolism; UMP biosynthesis via de novo pathway; UMP from orotate: step 2/2. The protein is Orotidine 5'-phosphate decarboxylase (pyrG) of Mucor circinelloides f. lusitanicus (Mucor racemosus var. lusitanicus).